The following is a 150-amino-acid chain: Clitocypin (150 aa).

The protein belongs to the protease inhibitor I48 family. As to quaternary structure, homodimer. In terms of tissue distribution, uniformly expressed throughout the mature fruiting body (at mRNA and protein level).

Its function is as follows. Binds and inhibits cysteine proteinases. Inhibits most strongly papain and cathepsin L, more weakly bromelain and cathepsin B while it is completely ineffective against cathepsin H. The protein is Clitocypin (Cnc1) of Clitocybe nebularis (Clouded agaric).